A 129-amino-acid polypeptide reads, in one-letter code: Translation initiation factor 5A (129 aa).

Position 36 is a hypusine (Lys-36).

This sequence belongs to the eIF-5A family.

It is found in the cytoplasm. In terms of biological role, functions by promoting the formation of the first peptide bond. The chain is Translation initiation factor 5A from Picrophilus torridus (strain ATCC 700027 / DSM 9790 / JCM 10055 / NBRC 100828 / KAW 2/3).